A 328-amino-acid chain; its full sequence is Transcription initiation factor TFIID subunit 8 (328 aa).

Residues 16-83 enclose the Histone-fold domain; it reads RRILNKVVSQ…DVSLALINMG (68 aa). The disordered stretch occupies residues 229–309; sequence NRTEDEPSKD…PGTMPSRSLA (81 aa). A phosphoserine mark is found at serine 236, serine 245, and serine 255. A compositionally biased stretch (acidic residues) spans 239–251; the sequence is DGEEGDSENEEMD. A compositionally biased stretch (basic and acidic residues) spans 252–264; sequence GDKSKEEKPELDI. A compositionally biased stretch (polar residues) spans 296–309; sequence NCPTPGTMPSRSLA.

It belongs to the TAF8 family. In terms of assembly, belongs to the TFIID complex which is composed of TATA binding protein (Tbp) and a number of TBP-associated factors (TAFs). Histone fold interacts with N-terminus of Taf10b.

Its subcellular location is the nucleus. Functionally, TFIID is a multimeric protein complex that plays a central role in mediating promoter responses to various activators and repressors. The polypeptide is Transcription initiation factor TFIID subunit 8 (Drosophila melanogaster (Fruit fly)).